Reading from the N-terminus, the 467-residue chain is Histone acetyltransferase type B catalytic subunit (467 aa).

The tract at residues 1-24 (MVQKQQASAGPGTEPKKRRRVGFS) is disordered. Residues 249 to 251 (ILV) and 256 to 262 (QGKGLGS) each bind acetyl-CoA. Glutamate 283 functions as the Proton donor/acceptor in the catalytic mechanism.

This sequence belongs to the HAT1 family.

It is found in the nucleus. Its subcellular location is the cytoplasm. The catalysed reaction is L-lysyl-[protein] + acetyl-CoA = N(6)-acetyl-L-lysyl-[protein] + CoA + H(+). Functionally, acetylates soluble but not nucleosomal H4. Acetylates 'Lys-12' of histone H4. The sequence is that of Histone acetyltransferase type B catalytic subunit (HAG2) from Arabidopsis thaliana (Mouse-ear cress).